The following is a 274-amino-acid chain: Urease accessory protein UreD (274 aa).

It belongs to the UreD family. As to quaternary structure, ureD, UreF and UreG form a complex that acts as a GTP-hydrolysis-dependent molecular chaperone, activating the urease apoprotein by helping to assemble the nickel containing metallocenter of UreC. The UreE protein probably delivers the nickel.

It is found in the cytoplasm. Required for maturation of urease via the functional incorporation of the urease nickel metallocenter. This Enterobacter sp. (strain 638) protein is Urease accessory protein UreD.